The primary structure comprises 345 residues: Molybdopterin synthase catalytic subunit (345 aa).

Substrate is bound by residues 101 to 102 (HR), K117, and 124 to 126 (KKE).

Belongs to the MoaE family. MOCS2B subfamily. As to quaternary structure, heterotetramer; composed of 2 small (Mocs2A) and 2 large (Mocs2B) subunits.

The protein localises to the cytoplasm. The catalysed reaction is 2 [molybdopterin-synthase sulfur-carrier protein]-C-terminal-Gly-aminoethanethioate + cyclic pyranopterin phosphate + H2O = molybdopterin + 2 [molybdopterin-synthase sulfur-carrier protein]-C-terminal Gly-Gly + 2 H(+). It functions in the pathway cofactor biosynthesis; molybdopterin biosynthesis. Catalytic subunit of the molybdopterin synthase complex, a complex that catalyzes the conversion of precursor Z into molybdopterin. Acts by mediating the incorporation of 2 sulfur atoms from thiocarboxylated Mocs2A into precursor Z to generate a dithiolene group. The polypeptide is Molybdopterin synthase catalytic subunit (Drosophila virilis (Fruit fly)).